Reading from the N-terminus, the 317-residue chain is DNA-directed RNA polymerase subunit alpha (317 aa).

The interval 1–234 is alpha N-terminal domain (alpha-NTD); that stretch reads MKQFNKPEFG…SHFDVFTTLA (234 aa). Positions 249-317 are alpha C-terminal domain (alpha-CTD); that stretch reads EEKELDKPVE…AALELTFKQN (69 aa).

Belongs to the RNA polymerase alpha chain family. In terms of assembly, homodimer. The RNAP catalytic core consists of 2 alpha, 1 beta, 1 beta' and 1 omega subunit. When a sigma factor is associated with the core the holoenzyme is formed, which can initiate transcription.

The enzyme catalyses RNA(n) + a ribonucleoside 5'-triphosphate = RNA(n+1) + diphosphate. Its function is as follows. DNA-dependent RNA polymerase catalyzes the transcription of DNA into RNA using the four ribonucleoside triphosphates as substrates. This Mesoplasma florum (strain ATCC 33453 / NBRC 100688 / NCTC 11704 / L1) (Acholeplasma florum) protein is DNA-directed RNA polymerase subunit alpha.